The chain runs to 250 residues: Triosephosphate isomerase (250 aa).

Residue 9–11 participates in substrate binding; that stretch reads NWK. His-96 serves as the catalytic Electrophile. The active-site Proton acceptor is Glu-166. Substrate-binding positions include Gly-172, Ser-212, and 233–234; that span reads GG.

The protein belongs to the triosephosphate isomerase family. In terms of assembly, homodimer.

The protein localises to the cytoplasm. It catalyses the reaction D-glyceraldehyde 3-phosphate = dihydroxyacetone phosphate. It participates in carbohydrate biosynthesis; gluconeogenesis. It functions in the pathway carbohydrate degradation; glycolysis; D-glyceraldehyde 3-phosphate from glycerone phosphate: step 1/1. Functionally, involved in the gluconeogenesis. Catalyzes stereospecifically the conversion of dihydroxyacetone phosphate (DHAP) to D-glyceraldehyde-3-phosphate (G3P). This Chlorobium phaeobacteroides (strain BS1) protein is Triosephosphate isomerase.